We begin with the raw amino-acid sequence, 803 residues long: E3 ubiquitin-protein ligase UHRF2 (803 aa).

The Ubiquitin-like domain occupies 1–78; it reads MWIQVRTIDG…IQLLVRPDSS (78 aa). Polar residues-rich tracts occupy residues 79–96, 106–115, 167–181, and 189–200; these read LPST…SSHN, GGSSSQPSTS, KNGS…NVNH, and KLDNVPSTSNSD. Disordered regions lie at residues 79–115 and 154–200; these read LPST…PSTS and RASD…SNSD. Positions 118–312 are required for interaction with histone H3; it reads TCLIDPGFGL…VDEIFKIEKP (195 aa). The interval 195 to 289 is interaction with PCNP; it reads STSNSDSVAA…KEVRVKVFLG (95 aa). A PHD-type zinc finger spans residues 340-396; sequence DKTCHMCSCHKCGEKRDPNMQLLCDECNMAYHIYCLSPPLDKVPEEEYWYCPSCKTD. Residues 415-645 form a methyl-CpG binding and interaction with HDAC1 region; sequence KMPSASTESR…LQYPAGYPSE (231 aa). One can recognise a YDG domain in the interval 449-613; that stretch reads GPIPGIPVGS…FLVWRYLLRR (165 aa). Residues 643 to 676 form a disordered region; the sequence is PSEKEGKKTKGQSKKQGSEATKRPASDDECPGDS. Residues 658–668 show a composition bias toward basic and acidic residues; sequence QGSEATKRPAS. Serine 668 bears the Phosphoserine mark. The segment at 734–773 adopts an RING-type zinc-finger fold; the sequence is CVCCQELVYQPVTTECFHNVCKDCLQRSFKAQVFSCPACR.

Homodimer; disulfide-linked. Binds methylated CpG containing oligonucleotides. Interacts with H3; the interaction has a preference for the 'Lys-9' trimethylated form of H3 (H3K9me3). Interacts with PCNP. Interacts with HDAC1. Interacts directly with CCNE1; the interaction ubiquitinates CCNE1 and appears independent of CCNE1 phosphorylation. Interacts with CCND1; the interaction ubiquitinates CCND1 and appears independent of CCND1 phosphorylation. Interacts with p53/TP53 and RB1. Interacts with UBE2I. Interacts with ZNF618. Interacts with UHRF1. Interacts with FANCD2. Interacts with ATR. Interacts with PCNA. May be autoubiquitinated; which may lead to proteasomal degradation. Post-translationally, phosphorylated. Phosphorylation may be mediated by CDK2. In terms of processing, autosumoylated. As to expression, mostly detected in several tissues, including the thymus, spleen, lung, adrenal gland, and ovary. In addition, found in several tissues in the brain (cerebellum, hippocampus, and cerebral cortex).

The protein localises to the nucleus. Its subcellular location is the chromosome. The catalysed reaction is S-ubiquitinyl-[E2 ubiquitin-conjugating enzyme]-L-cysteine + [acceptor protein]-L-lysine = [E2 ubiquitin-conjugating enzyme]-L-cysteine + N(6)-ubiquitinyl-[acceptor protein]-L-lysine.. It functions in the pathway protein modification; protein ubiquitination. E3 ligase activity is robustly activated by 5-hydroxy-methylcytosine. Functionally, E3 ubiquitin ligase that plays important roles in DNA methylation, histone modifications, cell cycle and DNA repair. Acts as a specific reader for 5-hydroxymethylcytosine (5hmC) and thereby recruits various substrates to these sites to ubiquitinate them. This activity also allows the maintenance of 5mC levels at specific genomic loci and regulates neuron-related gene expression. Participates in cell cycle regulation by ubiquitinating cyclins CCND1 and CCNE1 and thus inducing G1 arrest. Also ubiquitinates PCNP leading to its degradation by the proteasome. Plays an active role in DNA damage repair by ubiquitinating p21/CDKN1A leading to its proteasomal degradation. Also promotes DNA repair by acting as an interstrand cross-links (ICLs) sensor. Mechanistically, cooperates with UHRF1 to ensure recruitment of FANCD2 to ICLs, leading to FANCD2 monoubiquitination and subsequent activation. Contributes to UV-induced DNA damage response by physically interacting with ATR in response to irradiation, thereby promoting ATR activation. This Mus musculus (Mouse) protein is E3 ubiquitin-protein ligase UHRF2 (Uhrf2).